Consider the following 511-residue polypeptide: Centrosomal protein CCDC61 (511 aa).

N-acetylmethionine is present on Met-1. Positions 1–143 are head domain; that stretch reads MDQPAGLQVD…PLPLPYQGKP (143 aa). 2 coiled-coil regions span residues 176 to 203 and 246 to 273; these read IWHLREQVTRLTSEKRELEAQLGRSREE and SRRLAKELEEVKASERNLRARLKTLNSE. Thr-283 bears the Phosphothreonine mark. 2 disordered regions span residues 284–413 and 429–476; these read LPPV…DSFR and SHSV…GGWV. Basic and acidic residues predominate over residues 290 to 302; the sequence is REGRASSSRERST. A phosphoserine mark is found at Ser-330 and Ser-332. The span at 360–369 shows a compositional bias: low complexity; it reads KQQQQQRNRM. Residues Ser-371 and Ser-374 each carry the phosphoserine modification. Positions 433-442 are enriched in basic residues; sequence SRSRRCRGRG. At Ser-446 the chain carries Phosphoserine. Over residues 449–458 the composition is skewed to polar residues; the sequence is PWSRSKTKST. Ser-472 bears the Phosphoserine mark.

Belongs to the CCDC61 family. As to quaternary structure, forms homodimers (via head domain). Interacts with CEP170. Interacts with PCM1 and CEP131. Binds tubulin.

The protein localises to the cytoplasm. Its subcellular location is the cytoskeleton. It localises to the microtubule organizing center. The protein resides in the centrosome. It is found in the centriolar satellite. The protein localises to the cilium basal body. Functionally, microtubule-binding centrosomal protein required for centriole cohesion, independently of the centrosome-associated protein/CEP250 and rootletin/CROCC linker. In interphase, required for anchoring microtubule at the mother centriole subdistal appendages and for centrosome positioning. During mitosis, may be involved in spindle assembly and chromatin alignment by regulating the organization of spindle microtubules into a symmetrical structure. Plays a non-essential role in ciliogenesis. The protein is Centrosomal protein CCDC61 of Mus musculus (Mouse).